A 315-amino-acid polypeptide reads, in one-letter code: Olfactory receptor 4A8 (315 aa).

Over 1–24 (MRQNNNITEFVLLGFSQYPDVQNA) the chain is Extracellular. N-linked (GlcNAc...) asparagine glycosylation is present at N6. Residues 25–45 (LFVMFLLIYIVTMVGNLLIVV) form a helical membrane-spanning segment. Residues 46-57 (SIIASPFLGSPV) lie on the Cytoplasmic side of the membrane. A helical transmembrane segment spans residues 58–80 (YFFLACLSFIDAVYSTTISPVLI). At 81–95 (VDLLCDKKTISFPAC) the chain is on the extracellular side. C95 and C177 form a disulfide bridge. Residues 96–116 (MGQLFIEHLFGDTDVFLLVVM) traverse the membrane as a helical segment. Over 117–139 (AYDRYVATCKPLRYLTIMNRQVC) the chain is Cytoplasmic. The chain crosses the membrane as a helical span at residues 140 to 160 (ILLLVVAVTGGFLHSVFQILV). Residues 161-193 (VYSLPFCGPNVIYHFFCNIYPLLDLECTDTYFV) are Extracellular-facing. The helical transmembrane segment at 194-214 (GLAVVFNGGAICMVIFTLLLI) threads the bilayer. Topologically, residues 215–235 (SYGVILNSLKTYSPEGRHKAP) are cytoplasmic. Residues 236–256 (FICSSHFIMVILFFVPCIFLY) traverse the membrane as a helical segment. Residues 257–266 (VRPVSNFPID) are Extracellular-facing. Residues 267-287 (KFLTVFYSVITPKLNPFIYML) form a helical membrane-spanning segment. The Cytoplasmic portion of the chain corresponds to 288–315 (RNSEMRNAIENLLGYQSGKTGFRCSKLN).

The protein belongs to the G-protein coupled receptor 1 family.

It localises to the cell membrane. Functionally, odorant receptor. The polypeptide is Olfactory receptor 4A8 (OR4A8) (Homo sapiens (Human)).